The primary structure comprises 65 residues: Large ribosomal subunit protein bL35 (65 aa).

Positions 1 to 10 are enriched in basic and acidic residues; it reads MPKMKTDRGA. The disordered stretch occupies residues 1 to 24; it reads MPKMKTDRGAAKRFKKTGSGGFKC.

The protein belongs to the bacterial ribosomal protein bL35 family.

The polypeptide is Large ribosomal subunit protein bL35 (Tolumonas auensis (strain DSM 9187 / NBRC 110442 / TA 4)).